The chain runs to 223 residues: Chorismate dehydratase (223 aa).

The protein belongs to the MqnA/MqnD family. MqnA subfamily.

The enzyme catalyses chorismate = 3-[(1-carboxyvinyl)-oxy]benzoate + H2O. It participates in quinol/quinone metabolism; menaquinone biosynthesis. Its function is as follows. Catalyzes the dehydration of chorismate into 3-[(1-carboxyvinyl)oxy]benzoate, a step in the biosynthesis of menaquinone (MK, vitamin K2). The sequence is that of Chorismate dehydratase from Campylobacter jejuni subsp. jejuni serotype O:23/36 (strain 81-176).